We begin with the raw amino-acid sequence, 383 residues long: Acetyl-CoA acetyltransferase (383 aa).

The Acyl-thioester intermediate role is filled by C85. 4 residues coordinate CoA: C206, S207, I209, and K328. Residue H332 is the Proton acceptor of the active site.

This sequence belongs to the thiolase-like superfamily. Thiolase family. As to quaternary structure, interacts with HMG-CoA synthase (HMGCS) that catalyzes the second step in the pathway and with a DUF35 protein. The acetoacetyl-CoA thiolase/HMG-CoA synthase complex channels the intermediate via a fused CoA-binding site, which allows for efficient coupling of the endergonic thiolase reaction with the exergonic HMGCS reaction.

It carries out the reaction 2 acetyl-CoA = acetoacetyl-CoA + CoA. It participates in metabolic intermediate biosynthesis; (R)-mevalonate biosynthesis; (R)-mevalonate from acetyl-CoA: step 1/3. Its function is as follows. Catalyzes the condensation of two acetyl-coA molecules into acetoacetyl-CoA. Functions in the mevalonate (MVA) pathway leading to isopentenyl diphosphate (IPP), a key precursor for the biosynthesis of isoprenoid compounds that are building blocks of archaeal membrane lipids. This is Acetyl-CoA acetyltransferase from Methanothermobacter thermautotrophicus (strain ATCC 29096 / DSM 1053 / JCM 10044 / NBRC 100330 / Delta H) (Methanobacterium thermoautotrophicum).